The chain runs to 379 residues: Ribosomal RNA large subunit methyltransferase G (379 aa).

It belongs to the methyltransferase superfamily. RlmG family.

Its subcellular location is the cytoplasm. It carries out the reaction guanosine(1835) in 23S rRNA + S-adenosyl-L-methionine = N(2)-methylguanosine(1835) in 23S rRNA + S-adenosyl-L-homocysteine + H(+). Functionally, specifically methylates the guanine in position 1835 (m2G1835) of 23S rRNA. In Pectobacterium atrosepticum (strain SCRI 1043 / ATCC BAA-672) (Erwinia carotovora subsp. atroseptica), this protein is Ribosomal RNA large subunit methyltransferase G.